We begin with the raw amino-acid sequence, 205 residues long: Small ribosomal subunit protein uS4 (205 aa).

Positions Asn-18–Ser-46 are disordered. Residues Arg-94–Asn-157 enclose the S4 RNA-binding domain.

This sequence belongs to the universal ribosomal protein uS4 family. Part of the 30S ribosomal subunit. Contacts protein S5. The interaction surface between S4 and S5 is involved in control of translational fidelity.

Functionally, one of the primary rRNA binding proteins, it binds directly to 16S rRNA where it nucleates assembly of the body of the 30S subunit. Its function is as follows. With S5 and S12 plays an important role in translational accuracy. The sequence is that of Small ribosomal subunit protein uS4 from Rhodopseudomonas palustris (strain BisB5).